A 603-amino-acid chain; its full sequence is UvrABC system protein C (603 aa).

In terms of domain architecture, GIY-YIG spans 17–94; the sequence is TTSGCYKMLN…IKTHKPDYNV (78 aa). The 36-residue stretch at 199–234 folds into the UVR domain; the sequence is SEILSQIDIKLKLAVQKEDFETAIKLKEMKSSLIEI.

Belongs to the UvrC family. In terms of assembly, interacts with UvrB in an incision complex.

Its subcellular location is the cytoplasm. Its function is as follows. The UvrABC repair system catalyzes the recognition and processing of DNA lesions. UvrC both incises the 5' and 3' sides of the lesion. The N-terminal half is responsible for the 3' incision and the C-terminal half is responsible for the 5' incision. The sequence is that of UvrABC system protein C from Borrelia garinii subsp. bavariensis (strain ATCC BAA-2496 / DSM 23469 / PBi) (Borreliella bavariensis).